Here is a 728-residue protein sequence, read N- to C-terminus: Nucleolar GTP-binding protein 2 (728 aa).

The residue at position 1 (methionine 1) is an N-acetylmethionine. Positions 1-33 (MVKPKYKGRSTINRSAASTNPDRVQGAGGQNMR) are disordered. Positions 10–22 (STINRSAASTNPD) are enriched in polar residues. The CP-type G domain maps to 207–368 (WGELYKVIDS…LIDCPGVVYP (162 aa)). GTP contacts are provided by residues 317-324 (GYPNVGKS) and 361-365 (DCPGV). Disordered regions lie at residues 462–521 (PPNA…RNSE), 538–595 (VGPQ…DTKA), and 636–728 (YKEE…RQKQ). Low complexity predominate over residues 480–489 (EVPTETTQNN). Basic and acidic residues predominate over residues 498–520 (EVERSDSITEKEPEGDCSQDRNS). Position 504 is a phosphoserine (serine 504). Acidic residues predominate over residues 553 to 586 (SDLEDLESSGEEEEQEQEQPGEDAEEERSPDTQE). Over residues 718–728 (KHRRNKFRQKQ) the composition is skewed to basic residues.

It belongs to the TRAFAC class YlqF/YawG GTPase family. NOG2 subfamily. Interacts with LYAR and RPL23A. Interacts with the nuclear importin-beta receptor and, at a lower extent, with importin-alpha.

Its subcellular location is the nucleus. The protein resides in the nucleolus. Its function is as follows. GTPase that associates with pre-60S ribosomal subunits in the nucleolus and is required for their nuclear export and maturation. May promote cell proliferation possibly by increasing p53/TP53 protein levels, and consequently those of its downstream product CDKN1A/p21, and decreasing RPL23A protein levels. The sequence is that of Nucleolar GTP-binding protein 2 (Gnl2) from Mus musculus (Mouse).